A 701-amino-acid polypeptide reads, in one-letter code: Glycine--tRNA ligase beta subunit (701 aa).

It belongs to the class-II aminoacyl-tRNA synthetase family. As to quaternary structure, tetramer of two alpha and two beta subunits.

Its subcellular location is the cytoplasm. It catalyses the reaction tRNA(Gly) + glycine + ATP = glycyl-tRNA(Gly) + AMP + diphosphate. The chain is Glycine--tRNA ligase beta subunit from Anaeromyxobacter dehalogenans (strain 2CP-C).